Reading from the N-terminus, the 308-residue chain is Transcriptional adapter 1-2 (308 aa).

It belongs to the TADA1 family. In terms of assembly, component of the Spt-Ada-Gcn5 acetyltransferase (SAGA) complex consisting of wda/Taf5L, Saf6, Taf9, Taf10b, Taf12, Ada1, Spt3, Spt7, Spt20, Sf3b3, Sf3b5, Nipped-A/Tra1, a histone acetyltransferase (HAT) module made up of Gcn5, Ada2b (Isoform B), Ada3 and Sgf29, and a deubiquitinase (DUB) module made up of not/nonstop, Sgf11 and e(y)2 tethered to SAGA by Atxn7. Not a component of the Ada2a-containing ATAC complex.

Its subcellular location is the nucleus. In terms of biological role, component of the transcription regulatory complex SAGA, a multiprotein complex that activates transcription by remodeling chromatin and mediating histone acetylation and deubiquitination. The SAGA complex predominantly acetylates histone H3. The sequence is that of Transcriptional adapter 1-2 from Drosophila melanogaster (Fruit fly).